The chain runs to 553 residues: Dihydroxy-acid dehydratase (553 aa).

Asp-78 contacts Mg(2+). Cys-119 is a binding site for [2Fe-2S] cluster. Positions 120 and 121 each coordinate Mg(2+). Lys-121 bears the N6-carboxylysine mark. Position 191 (Cys-191) interacts with [2Fe-2S] cluster. Mg(2+) is bound at residue Glu-444. Ser-470 (proton acceptor) is an active-site residue.

This sequence belongs to the IlvD/Edd family. Homodimer. It depends on [2Fe-2S] cluster as a cofactor. The cofactor is Mg(2+).

It catalyses the reaction (2R)-2,3-dihydroxy-3-methylbutanoate = 3-methyl-2-oxobutanoate + H2O. The enzyme catalyses (2R,3R)-2,3-dihydroxy-3-methylpentanoate = (S)-3-methyl-2-oxopentanoate + H2O. The protein operates within amino-acid biosynthesis; L-isoleucine biosynthesis; L-isoleucine from 2-oxobutanoate: step 3/4. It participates in amino-acid biosynthesis; L-valine biosynthesis; L-valine from pyruvate: step 3/4. In terms of biological role, functions in the biosynthesis of branched-chain amino acids. Catalyzes the dehydration of (2R,3R)-2,3-dihydroxy-3-methylpentanoate (2,3-dihydroxy-3-methylvalerate) into 2-oxo-3-methylpentanoate (2-oxo-3-methylvalerate) and of (2R)-2,3-dihydroxy-3-methylbutanoate (2,3-dihydroxyisovalerate) into 2-oxo-3-methylbutanoate (2-oxoisovalerate), the penultimate precursor to L-isoleucine and L-valine, respectively. This is Dihydroxy-acid dehydratase from Methanococcoides burtonii (strain DSM 6242 / NBRC 107633 / OCM 468 / ACE-M).